A 505-amino-acid polypeptide reads, in one-letter code: 2,3-bisphosphoglycerate-independent phosphoglycerate mutase (505 aa).

Mn(2+)-binding residues include Asp-11 and Ser-61. The active-site Phosphoserine intermediate is Ser-61. Substrate is bound by residues His-122, 152 to 153 (RD), Arg-183, Arg-189, 259 to 262 (RTDR), and Lys-332. Mn(2+) is bound by residues Asp-399, His-403, Asp-440, His-441, and His-458.

Belongs to the BPG-independent phosphoglycerate mutase family. Monomer. Mn(2+) serves as cofactor.

The catalysed reaction is (2R)-2-phosphoglycerate = (2R)-3-phosphoglycerate. It functions in the pathway carbohydrate degradation; glycolysis; pyruvate from D-glyceraldehyde 3-phosphate: step 3/5. Functionally, catalyzes the interconversion of 2-phosphoglycerate and 3-phosphoglycerate. This chain is 2,3-bisphosphoglycerate-independent phosphoglycerate mutase, found in Flavobacterium johnsoniae (strain ATCC 17061 / DSM 2064 / JCM 8514 / BCRC 14874 / CCUG 350202 / NBRC 14942 / NCIMB 11054 / UW101) (Cytophaga johnsonae).